The following is a 66-amino-acid chain: Large ribosomal subunit protein uL29 (66 aa).

This sequence belongs to the universal ribosomal protein uL29 family.

The protein is Large ribosomal subunit protein uL29 of Thermosipho melanesiensis (strain DSM 12029 / CIP 104789 / BI429).